A 377-amino-acid chain; its full sequence is Interferon gamma receptor 1 (377 aa).

The first 23 residues, 1 to 23 (MRTQIYISVTVLILLLKKSDLEA), serve as a signal peptide directing secretion. Residues 24–235 (VRVPSPESVS…IRRYTPFTVY (212 aa)) lie on the Extracellular side of the membrane. The Fibronectin type-III domain occupies 26 to 117 (VPSPESVSVQ…DFFIFSFNEN (92 aa)). N-linked (GlcNAc...) asparagine glycans are attached at residues Asn78 and Asn186. A helical transmembrane segment spans residues 236–256 (LYPVLGVTLTLLFITGIIILL). Residues 257-377 (EKKCNSEMKK…TVDSYGPRLL (121 aa)) lie on the Cytoplasmic side of the membrane. The interval 326–377 (VYSEDKNSYGPNDLVEDEQSDLSDFYDCPHAPKQKREMSPGDTVDSYGPRLL) is disordered.

This sequence belongs to the type II cytokine receptor family. In terms of tissue distribution, highly expressed in spleen. Also detected in brain, kidney, gill, intestine and heart. Expressed at very low levels in muscle. In immune cell populations, shows highest expression in monocytes, and slightly lower expression in peripheral blood leukocytes, splenocytes, neutrophils and mature macrophages.

The protein localises to the cell membrane. Functionally, receptor which shows binding specificity for the cytokine ifng1r (interferon gamma-related). The polypeptide is Interferon gamma receptor 1 (Carassius auratus (Goldfish)).